Reading from the N-terminus, the 197-residue chain is Imidazoleglycerol-phosphate dehydratase (197 aa).

The protein belongs to the imidazoleglycerol-phosphate dehydratase family.

It localises to the cytoplasm. The enzyme catalyses D-erythro-1-(imidazol-4-yl)glycerol 3-phosphate = 3-(imidazol-4-yl)-2-oxopropyl phosphate + H2O. It participates in amino-acid biosynthesis; L-histidine biosynthesis; L-histidine from 5-phospho-alpha-D-ribose 1-diphosphate: step 6/9. The sequence is that of Imidazoleglycerol-phosphate dehydratase from Nitrosomonas europaea (strain ATCC 19718 / CIP 103999 / KCTC 2705 / NBRC 14298).